A 477-amino-acid chain; its full sequence is Tyrosine-protein kinase transforming protein Fes (477 aa).

Residues 49–76 (GEPPPVLLLQDDRHSTSSSEQEREGGRT) are disordered. Basic and acidic residues predominate over residues 58–74 (QDDRHSTSSSEQEREGG). The SH2 domain maps to 115–204 (WYHGALPRAE…KSGIVLNRAV (90 aa)). The 262-residue stretch at 216–477 (LVLGEQIGRG…ELQSIRKRHR (262 aa)) folds into the Protein kinase domain. ATP contacts are provided by residues 222 to 230 (IGRGNFGEV) and K245. D338 serves as the catalytic Proton acceptor. At Y368 the chain carries Phosphotyrosine; by autocatalysis.

Belongs to the protein kinase superfamily. Tyr protein kinase family. Fes/fps subfamily.

The enzyme catalyses L-tyrosyl-[protein] + ATP = O-phospho-L-tyrosyl-[protein] + ADP + H(+). The chain is Tyrosine-protein kinase transforming protein Fes (V-FES) from Feline sarcoma virus (strain Snyder-Theilen).